The following is a 754-amino-acid chain: Disintegrin and metalloproteinase domain-containing protein 32 (754 aa).

The signal sequence occupies residues 1–22 (MLGAMLHTLLLLLLAELGALLA). The residue at position 23 (Ser23) is a Phosphoserine. A propeptide spanning residues 23-176 (SGPESQSSFL…TNYGILINKK (154 aa)) is cleaved from the precursor. Asn126 carries N-linked (GlcNAc...) asparagine glycosylation. At 177 to 689 (PKSPFKNLFP…ERASKNQEKK (513 aa)) the chain is on the extracellular side. The Peptidase M12B domain occupies 187-384 (LYLEMSIVVD…EGAKCLQNKP (198 aa)). Cystine bridges form between Cys296–Cys379, Cys338–Cys363, Cys340–Cys345, and Cys454–Cys475. Asn362, Asn469, Asn570, and Asn571 each carry an N-linked (GlcNAc...) asparagine glycan. Residues 391 to 483 (AAVCGNGKVE…NCPPDVTINN (93 aa)) enclose the Disintegrin domain. Positions 628-660 (QSKTCSSKCHGNGVCNSHGVCHCNAGYSPPNCQ) constitute an EGF-like domain. Cystine bridges form between Cys632–Cys642, Cys636–Cys648, and Cys650–Cys659. A helical transmembrane segment spans residues 690–710 (WLLSLYIVLIILASVFLIGTG). Residues 711–754 (WKGLKQCGSKEEESMSSESKSEDSTYTYVSRSTSETSSMTSTSS) lie on the Cytoplasmic side of the membrane. Residues 720 to 733 (KEEESMSSESKSED) are compositionally biased toward basic and acidic residues. Residues 720–754 (KEEESMSSESKSEDSTYTYVSRSTSETSSMTSTSS) are disordered. Over residues 734–754 (STYTYVSRSTSETSSMTSTSS) the composition is skewed to low complexity.

Expressed in sperm (at protein level). Highly expressed in the testis and weakly expressed in the epididymis, brain and heart.

The protein localises to the membrane. Functionally, may play a role in sperm development and fertilization This is a non-catalytic metalloprotease-like protein. The protein is Disintegrin and metalloproteinase domain-containing protein 32 of Mus musculus (Mouse).